Consider the following 65-residue polypeptide: MIKKKSHSGLKKRIKISKNKKILRGHAYKNHLAASKTTKQNRQLRGLTMVHKSDVKRIKIMLNNL.

Belongs to the bacterial ribosomal protein bL35 family.

The chain is Large ribosomal subunit protein bL35 from Phytoplasma mali (strain AT).